A 117-amino-acid polypeptide reads, in one-letter code: Large ribosomal subunit protein eL18 (117 aa).

It belongs to the eukaryotic ribosomal protein eL18 family.

This Halobacterium salinarum (strain ATCC 29341 / DSM 671 / R1) protein is Large ribosomal subunit protein eL18.